The primary structure comprises 349 residues: Gibberellin 3-beta-dioxygenase 3 (349 aa).

In terms of domain architecture, Fe2OG dioxygenase spans 201-305 (SIQSFLQLNS…RVSAAYFAGP (105 aa)). Residues His-226, Asp-228, and His-286 each coordinate Fe cation. Arg-296 is an active-site residue.

It belongs to the iron/ascorbate-dependent oxidoreductase family. GA3OX subfamily. L-ascorbate serves as cofactor. Requires Fe cation as cofactor. Expressed in flower clusters and siliques.

The catalysed reaction is gibberellin A20 + 2-oxoglutarate + O2 = gibberellin A1 + succinate + CO2. Its pathway is plant hormone biosynthesis; gibberellin biosynthesis. In terms of biological role, converts the inactive gibberellin (GA) precursors GA9 and GA20 in the bioactives gibberellins GA4 and GA1. Involved in the production of bioactive GA for reproductive development. This chain is Gibberellin 3-beta-dioxygenase 3 (GA3OX3), found in Arabidopsis thaliana (Mouse-ear cress).